A 378-amino-acid polypeptide reads, in one-letter code: Valine--tRNA ligase (378 aa).

Residues 307–377 are a coiled coil; sequence AGFINKEAEL…IQEQYKAIEA (71 aa).

Belongs to the class-I aminoacyl-tRNA synthetase family. ValS type 1 subfamily. Monomer.

The protein resides in the cytoplasm. The enzyme catalyses tRNA(Val) + L-valine + ATP = L-valyl-tRNA(Val) + AMP + diphosphate. Its function is as follows. Catalyzes the attachment of valine to tRNA(Val). As ValRS can inadvertently accommodate and process structurally similar amino acids such as threonine, to avoid such errors, it has a 'posttransfer' editing activity that hydrolyzes mischarged Thr-tRNA(Val) in a tRNA-dependent manner. The polypeptide is Valine--tRNA ligase (valS) (Haemophilus parainfluenzae).